Here is a 220-residue protein sequence, read N- to C-terminus: MKSITINGSKRESVGKKATKALRNAGQVPCVLYGVEGDPLHFAAEEISFKNLVYTPDVHTVKIKLKSGESYDAILQDIQFHPLTDAILHIDFYQIFGEKPITMEIPIHTEGVARGVKNGGVLRYNLRRLKVRGLPADLPDYIVANVSKLKIGQKLYVTGVDSKDFVIQHPDNTVICQVRTSRNLVELEDEDEDEDEVAADEVPATEVDDQAAVKEGEGKE.

Residues glutamate 186–alanine 199 show a composition bias toward acidic residues. A disordered region spans residues glutamate 186 to glutamate 220. Residues alanine 211–glutamate 220 show a composition bias toward basic and acidic residues.

This sequence belongs to the bacterial ribosomal protein bL25 family. CTC subfamily. Part of the 50S ribosomal subunit; part of the 5S rRNA/L5/L18/L25 subcomplex. Contacts the 5S rRNA. Binds to the 5S rRNA independently of L5 and L18.

Its function is as follows. This is one of the proteins that binds to the 5S RNA in the ribosome where it forms part of the central protuberance. The sequence is that of Large ribosomal subunit protein bL25 from Christiangramia forsetii (strain DSM 17595 / CGMCC 1.15422 / KT0803) (Gramella forsetii).